The following is a 347-amino-acid chain: Outer membrane protein A (347 aa).

Positions 1–21 are cleaved as a signal peptide; the sequence is MKKQALTIIFLLVSLVTGIQA. 8 beta stranded membrane-spanning segments follow: residues 26-36, 63-74, 78-86, 105-116, 121-129, 154-163, 168-175, and 194-202; these read HWYLGTKMGWS, APVFGLFLGYEF, FSFEIENDT, NSLQLATKLSYP, FHIYTQLGG, PNVSLGAEYI, FITRLDYT, and DVALSFGWK. Residues 207-218 form a hinge-like region; that stretch reads NINEIFSSYIPQ. The 128-residue stretch at 220-347 folds into the OmpA-like domain; the sequence is SDKQYVALNE…RRVEIEVLSD (128 aa). An intrachain disulfide couples Cys321 to Cys333.

The protein belongs to the outer membrane OOP (TC 1.B.6) superfamily. OmpA family. Monomer and homodimer.

Its subcellular location is the cell outer membrane. Functionally, with TolR probably plays a role in maintaining the position of the peptidoglycan cell wall in the periplasm. Acts as a porin with low permeability that allows slow penetration of small solutes; an internal gate slows down solute passage. This is Outer membrane protein A from Buchnera aphidicola subsp. Schizaphis graminum (strain Sg).